A 218-amino-acid chain; its full sequence is ATP phosphoribosyltransferase (218 aa).

Belongs to the ATP phosphoribosyltransferase family. Short subfamily. In terms of assembly, heteromultimer composed of HisG and HisZ subunits.

It is found in the cytoplasm. The enzyme catalyses 1-(5-phospho-beta-D-ribosyl)-ATP + diphosphate = 5-phospho-alpha-D-ribose 1-diphosphate + ATP. The protein operates within amino-acid biosynthesis; L-histidine biosynthesis; L-histidine from 5-phospho-alpha-D-ribose 1-diphosphate: step 1/9. Catalyzes the condensation of ATP and 5-phosphoribose 1-diphosphate to form N'-(5'-phosphoribosyl)-ATP (PR-ATP). Has a crucial role in the pathway because the rate of histidine biosynthesis seems to be controlled primarily by regulation of HisG enzymatic activity. This Lactiplantibacillus plantarum (strain ATCC BAA-793 / NCIMB 8826 / WCFS1) (Lactobacillus plantarum) protein is ATP phosphoribosyltransferase.